The sequence spans 504 residues: Cholesterol 7-alpha-monooxygenase (504 aa).

Cys-444 contributes to the heme binding site.

Belongs to the cytochrome P450 family. Heme is required as a cofactor.

The protein localises to the endoplasmic reticulum membrane. It is found in the microsome membrane. The catalysed reaction is cholesterol + reduced [NADPH--hemoprotein reductase] + O2 = 7alpha-hydroxycholesterol + oxidized [NADPH--hemoprotein reductase] + H2O + H(+). It functions in the pathway lipid metabolism; bile acid biosynthesis. Functionally, catalyzes a rate-limiting step in cholesterol catabolism and bile acid biosynthesis by introducing a hydrophilic moiety at position 7 of cholesterol. Important for cholesterol homeostasis. This chain is Cholesterol 7-alpha-monooxygenase (CYP7A1), found in Cricetulus griseus (Chinese hamster).